A 561-amino-acid chain; its full sequence is Dihydroxy-acid dehydratase (561 aa).

Cys-51 contacts [2Fe-2S] cluster. Asp-83 is a Mg(2+) binding site. A [2Fe-2S] cluster-binding site is contributed by Cys-124. Mg(2+) contacts are provided by Asp-125 and Lys-126. Position 126 is an N6-carboxylysine (Lys-126). Cys-196 is a binding site for [2Fe-2S] cluster. Position 447 (Glu-447) interacts with Mg(2+). The active-site Proton acceptor is Ser-473.

It belongs to the IlvD/Edd family. Homodimer. [2Fe-2S] cluster serves as cofactor. Requires Mg(2+) as cofactor.

The catalysed reaction is (2R)-2,3-dihydroxy-3-methylbutanoate = 3-methyl-2-oxobutanoate + H2O. It carries out the reaction (2R,3R)-2,3-dihydroxy-3-methylpentanoate = (S)-3-methyl-2-oxopentanoate + H2O. It functions in the pathway amino-acid biosynthesis; L-isoleucine biosynthesis; L-isoleucine from 2-oxobutanoate: step 3/4. Its pathway is amino-acid biosynthesis; L-valine biosynthesis; L-valine from pyruvate: step 3/4. Functions in the biosynthesis of branched-chain amino acids. Catalyzes the dehydration of (2R,3R)-2,3-dihydroxy-3-methylpentanoate (2,3-dihydroxy-3-methylvalerate) into 2-oxo-3-methylpentanoate (2-oxo-3-methylvalerate) and of (2R)-2,3-dihydroxy-3-methylbutanoate (2,3-dihydroxyisovalerate) into 2-oxo-3-methylbutanoate (2-oxoisovalerate), the penultimate precursor to L-isoleucine and L-valine, respectively. The chain is Dihydroxy-acid dehydratase from Oceanobacillus iheyensis (strain DSM 14371 / CIP 107618 / JCM 11309 / KCTC 3954 / HTE831).